The sequence spans 360 residues: MKPSMLAKLDQLTERLDELNVLLMQEDATSNMDNYRKMTREHAELGPLVALYGNYRQADSDIQDAQGMLSDPDMKEFAQEEIAAAKTRMEQLEIDLQKMLLPKDPNDDRNIFLEIRAGTGGDEAALFAGDLLRMYSRFAERNRWQIEMVSESASEVGGYKEVIVRIIGFGAYSKLKFESGGHRVQRVPATETQGRIHTSACTVAIMPEADEVEDVNINPADLRIDTYRASGAGGQHINKTDSAVRITHIPTGIVVECQDDRSQHKNKASALKVLAARIKDVQLREQQSKEAATRKSLIGSGDRSERIRTYNFPQGRMTDHRINLTLYKLDFIMDGDLTELTNALAAEHQAELLAALGDAN.

At Gln235 the chain carries N5-methylglutamine.

The protein belongs to the prokaryotic/mitochondrial release factor family. In terms of processing, methylated by PrmC. Methylation increases the termination efficiency of RF1.

Its subcellular location is the cytoplasm. In terms of biological role, peptide chain release factor 1 directs the termination of translation in response to the peptide chain termination codons UAG and UAA. In Janthinobacterium sp. (strain Marseille) (Minibacterium massiliensis), this protein is Peptide chain release factor 1.